The chain runs to 176 residues: Lipoprotein signal peptidase (176 aa).

4 helical membrane passes run 26 to 46 (LWLAFALLVVLLDQFFKIVIV), 57 to 77 (VTGFFNLVLVYNKGAAFSFLA), 82 to 102 (WQRWFFTGLGVVVGAFIVWLL), and 111 to 131 (FCFAVSLILGGAVGNVVDRVI). Catalysis depends on residues Asp-137 and Asp-155. The helical transmembrane segment at 147–167 (HWPAFNVADCAITVGAVLLIV) threads the bilayer.

This sequence belongs to the peptidase A8 family.

The protein localises to the cell inner membrane. It carries out the reaction Release of signal peptides from bacterial membrane prolipoproteins. Hydrolyzes -Xaa-Yaa-Zaa-|-(S,diacylglyceryl)Cys-, in which Xaa is hydrophobic (preferably Leu), and Yaa (Ala or Ser) and Zaa (Gly or Ala) have small, neutral side chains.. Its pathway is protein modification; lipoprotein biosynthesis (signal peptide cleavage). Its function is as follows. This protein specifically catalyzes the removal of signal peptides from prolipoproteins. The protein is Lipoprotein signal peptidase of Cupriavidus taiwanensis (strain DSM 17343 / BCRC 17206 / CCUG 44338 / CIP 107171 / LMG 19424 / R1) (Ralstonia taiwanensis (strain LMG 19424)).